A 720-amino-acid chain; its full sequence is Photosystem I P700 chlorophyll a apoprotein A1 (720 aa).

The next 8 helical transmembrane spans lie at 62-85 (IFSA…FHGA), 148-171 (LYCT…FHYH), 186-210 (LNHH…HVSL), 282-300 (IVHH…GHMY), 337-360 (WHAQ…HHMY), 376-402 (LSLF…IFLV), 424-446 (AIIS…LYIH), and 522-540 (FLVH…LILL). [4Fe-4S] cluster-binding residues include cysteine 564 and cysteine 573. 2 consecutive transmembrane segments (helical) span residues 580 to 601 (HVFL…HFSW) and 655 to 677 (LSAY…MFLF). Position 666 (histidine 666) interacts with chlorophyll a'. Methionine 674 and tyrosine 682 together coordinate chlorophyll a. Residue tryptophan 683 coordinates phylloquinone. A helical transmembrane segment spans residues 715–720 (AVGVAH).

The protein belongs to the PsaA/PsaB family. The PsaA/B heterodimer binds the P700 chlorophyll special pair and subsequent electron acceptors. PSI consists of a core antenna complex that captures photons, and an electron transfer chain that converts photonic excitation into a charge separation. The eukaryotic PSI reaction center is composed of at least 11 subunits. P700 is a chlorophyll a/chlorophyll a' dimer, A0 is one or more chlorophyll a, A1 is one or both phylloquinones and FX is a shared 4Fe-4S iron-sulfur center. serves as cofactor.

Its subcellular location is the plastid. It localises to the chloroplast thylakoid membrane. The enzyme catalyses reduced [plastocyanin] + hnu + oxidized [2Fe-2S]-[ferredoxin] = oxidized [plastocyanin] + reduced [2Fe-2S]-[ferredoxin]. PsaA and PsaB bind P700, the primary electron donor of photosystem I (PSI), as well as the electron acceptors A0, A1 and FX. PSI is a plastocyanin-ferredoxin oxidoreductase, converting photonic excitation into a charge separation, which transfers an electron from the donor P700 chlorophyll pair to the spectroscopically characterized acceptors A0, A1, FX, FA and FB in turn. Oxidized P700 is reduced on the lumenal side of the thylakoid membrane by plastocyanin. The protein is Photosystem I P700 chlorophyll a apoprotein A1 of Ephedra tweediana (Vining horsetail).